Here is a 286-residue protein sequence, read N- to C-terminus: 33 kDa chaperonin (286 aa).

2 disulfide bridges follow: Cys-225-Cys-227 and Cys-258-Cys-261.

This sequence belongs to the HSP33 family. Under oxidizing conditions two disulfide bonds are formed involving the reactive cysteines. Under reducing conditions zinc is bound to the reactive cysteines and the protein is inactive.

The protein localises to the cytoplasm. Redox regulated molecular chaperone. Protects both thermally unfolding and oxidatively damaged proteins from irreversible aggregation. Plays an important role in the bacterial defense system toward oxidative stress. In Shewanella oneidensis (strain ATCC 700550 / JCM 31522 / CIP 106686 / LMG 19005 / NCIMB 14063 / MR-1), this protein is 33 kDa chaperonin.